Consider the following 202-residue polypeptide: Large ribosomal subunit protein bL25 (202 aa).

The interval 182–202 (QTAPEEEEGTAAETTEPELAE) is disordered. A compositionally biased stretch (acidic residues) spans 185–202 (PEEEEGTAAETTEPELAE).

It belongs to the bacterial ribosomal protein bL25 family. CTC subfamily. In terms of assembly, part of the 50S ribosomal subunit; part of the 5S rRNA/L5/L18/L25 subcomplex. Contacts the 5S rRNA. Binds to the 5S rRNA independently of L5 and L18.

This is one of the proteins that binds to the 5S RNA in the ribosome where it forms part of the central protuberance. The protein is Large ribosomal subunit protein bL25 of Enterococcus faecalis (strain ATCC 700802 / V583).